Here is a 347-residue protein sequence, read N- to C-terminus: Uroporphyrinogen decarboxylase (347 aa).

Residues 24 to 28 (RQAGR), aspartate 74, tyrosine 145, serine 200, and histidine 315 each bind substrate.

It belongs to the uroporphyrinogen decarboxylase family. As to quaternary structure, homodimer.

The protein resides in the cytoplasm. It carries out the reaction uroporphyrinogen III + 4 H(+) = coproporphyrinogen III + 4 CO2. It participates in porphyrin-containing compound metabolism; protoporphyrin-IX biosynthesis; coproporphyrinogen-III from 5-aminolevulinate: step 4/4. Catalyzes the decarboxylation of four acetate groups of uroporphyrinogen-III to yield coproporphyrinogen-III. The chain is Uroporphyrinogen decarboxylase from Hydrogenobaculum sp. (strain Y04AAS1).